Here is a 391-residue protein sequence, read N- to C-terminus: Tryptophan synthase beta chain (391 aa).

Residue K84 is modified to N6-(pyridoxal phosphate)lysine.

This sequence belongs to the TrpB family. Tetramer of two alpha and two beta chains. Requires pyridoxal 5'-phosphate as cofactor.

It catalyses the reaction (1S,2R)-1-C-(indol-3-yl)glycerol 3-phosphate + L-serine = D-glyceraldehyde 3-phosphate + L-tryptophan + H2O. The protein operates within amino-acid biosynthesis; L-tryptophan biosynthesis; L-tryptophan from chorismate: step 5/5. Its function is as follows. The beta subunit is responsible for the synthesis of L-tryptophan from indole and L-serine. This Caldanaerobacter subterraneus subsp. tengcongensis (strain DSM 15242 / JCM 11007 / NBRC 100824 / MB4) (Thermoanaerobacter tengcongensis) protein is Tryptophan synthase beta chain.